A 515-amino-acid polypeptide reads, in one-letter code: Bifunctional purine biosynthesis protein PurH (515 aa).

The MGS-like domain occupies 1–145 (MTKRALISVS…KNHASVTVVV (145 aa)).

This sequence belongs to the PurH family.

It catalyses the reaction (6R)-10-formyltetrahydrofolate + 5-amino-1-(5-phospho-beta-D-ribosyl)imidazole-4-carboxamide = 5-formamido-1-(5-phospho-D-ribosyl)imidazole-4-carboxamide + (6S)-5,6,7,8-tetrahydrofolate. It carries out the reaction IMP + H2O = 5-formamido-1-(5-phospho-D-ribosyl)imidazole-4-carboxamide. It functions in the pathway purine metabolism; IMP biosynthesis via de novo pathway; 5-formamido-1-(5-phospho-D-ribosyl)imidazole-4-carboxamide from 5-amino-1-(5-phospho-D-ribosyl)imidazole-4-carboxamide (10-formyl THF route): step 1/1. It participates in purine metabolism; IMP biosynthesis via de novo pathway; IMP from 5-formamido-1-(5-phospho-D-ribosyl)imidazole-4-carboxamide: step 1/1. This is Bifunctional purine biosynthesis protein PurH from Streptococcus pyogenes serotype M18 (strain MGAS8232).